Reading from the N-terminus, the 466-residue chain is Cysteine--tRNA ligase (466 aa).

Cys28 is a binding site for Zn(2+). Residues 30 to 40 (PTVYNYIHIGN) carry the 'HIGH' region motif. Residues Cys208, His233, and Glu237 each coordinate Zn(2+). Positions 265–269 (KMSKS) match the 'KMSKS' region motif. Residue Lys268 participates in ATP binding. At Ser269 the chain carries Phosphoserine.

Belongs to the class-I aminoacyl-tRNA synthetase family. As to quaternary structure, monomer. Requires Zn(2+) as cofactor.

The protein localises to the cytoplasm. The catalysed reaction is tRNA(Cys) + L-cysteine + ATP = L-cysteinyl-tRNA(Cys) + AMP + diphosphate. The protein is Cysteine--tRNA ligase of Shouchella clausii (strain KSM-K16) (Alkalihalobacillus clausii).